Here is a 453-residue protein sequence, read N- to C-terminus: Tubulin alpha chain (453 aa).

Gln11 serves as a coordination point for GTP. The residue at position 40 (Lys40) is an N6-acetyllysine. Residues Glu71, Gly144, Thr145, Thr179, Asn206, and Asn228 each coordinate GTP. Position 71 (Glu71) interacts with Mg(2+). The active site involves Glu254.

The protein belongs to the tubulin family. Dimer of alpha and beta chains. A typical microtubule is a hollow water-filled tube with an outer diameter of 25 nm and an inner diameter of 15 nM. Alpha-beta heterodimers associate head-to-tail to form protofilaments running lengthwise along the microtubule wall with the beta-tubulin subunit facing the microtubule plus end conferring a structural polarity. Microtubules usually have 13 protofilaments but different protofilament numbers can be found in some organisms and specialized cells. Mg(2+) serves as cofactor. Post-translationally, undergoes a tyrosination/detyrosination cycle, the cyclic removal and re-addition of a C-terminal tyrosine residue by the enzymes tubulin tyrosine carboxypeptidase (TTCP) and tubulin tyrosine ligase (TTL), respectively. Acetylation of alpha chains at Lys-40 stabilizes microtubules and affects affinity and processivity of microtubule motors. This modification has a role in multiple cellular functions, ranging from cell motility, cell cycle progression or cell differentiation to intracellular trafficking and signaling.

It localises to the cytoplasm. It is found in the cytoskeleton. It catalyses the reaction GTP + H2O = GDP + phosphate + H(+). Functionally, tubulin is the major constituent of microtubules, a cylinder consisting of laterally associated linear protofilaments composed of alpha- and beta-tubulin heterodimers. Microtubules grow by the addition of GTP-tubulin dimers to the microtubule end, where a stabilizing cap forms. Below the cap, tubulin dimers are in GDP-bound state, owing to GTPase activity of alpha-tubulin. The protein is Tubulin alpha chain (TUBA) of Neospora caninum (Coccidian parasite).